Consider the following 488-residue polypeptide: UDP-N-acetylmuramoyl-L-alanyl-D-glutamate--2,6-diaminopimelate ligase (488 aa).

UDP-N-acetyl-alpha-D-muramoyl-L-alanyl-D-glutamate is bound by residues Leu24, Ser26, and 41–43 (HQV). 113 to 119 (GTNGKTT) serves as a coordination point for ATP. Residues Asn154, 155–156 (TT), Ser182, Gln188, and Arg190 each bind UDP-N-acetyl-alpha-D-muramoyl-L-alanyl-D-glutamate. Lys222 is modified (N6-carboxylysine). Meso-2,6-diaminopimelate-binding positions include Arg386, 410 to 413 (DNPR), Gly461, and Glu465. Positions 410 to 413 (DNPR) match the Meso-diaminopimelate recognition motif motif.

This sequence belongs to the MurCDEF family. MurE subfamily. Mg(2+) serves as cofactor. Carboxylation is probably crucial for Mg(2+) binding and, consequently, for the gamma-phosphate positioning of ATP.

It localises to the cytoplasm. It catalyses the reaction UDP-N-acetyl-alpha-D-muramoyl-L-alanyl-D-glutamate + meso-2,6-diaminopimelate + ATP = UDP-N-acetyl-alpha-D-muramoyl-L-alanyl-gamma-D-glutamyl-meso-2,6-diaminopimelate + ADP + phosphate + H(+). Its pathway is cell wall biogenesis; peptidoglycan biosynthesis. Catalyzes the addition of meso-diaminopimelic acid to the nucleotide precursor UDP-N-acetylmuramoyl-L-alanyl-D-glutamate (UMAG) in the biosynthesis of bacterial cell-wall peptidoglycan. The sequence is that of UDP-N-acetylmuramoyl-L-alanyl-D-glutamate--2,6-diaminopimelate ligase from Haemophilus influenzae (strain ATCC 51907 / DSM 11121 / KW20 / Rd).